The following is a 68-amino-acid chain: DNA gyrase inhibitor YacG (68 aa).

Residues C10, C13, C29, and C33 each contribute to the Zn(2+) site.

It belongs to the DNA gyrase inhibitor YacG family. In terms of assembly, interacts with GyrB. The cofactor is Zn(2+).

In terms of biological role, inhibits all the catalytic activities of DNA gyrase by preventing its interaction with DNA. Acts by binding directly to the C-terminal domain of GyrB, which probably disrupts DNA binding by the gyrase. This is DNA gyrase inhibitor YacG from Haemophilus influenzae (strain PittGG).